The sequence spans 124 residues: Sporulation initiation phosphotransferase F (124 aa).

Residues 5–119 form the Response regulatory domain; that stretch reads KILIVDDQYG…EIRDAVKKYL (115 aa). 4 residues coordinate Mg(2+): aspartate 10, aspartate 11, aspartate 54, and lysine 56. Aspartate 54 carries the 4-aspartylphosphate modification.

The cofactor is Mg(2+). Post-translationally, phosphorylated by KinA and KinB. Dephosphorylated by RapA and RapB.

The protein localises to the cytoplasm. In terms of biological role, key element in the phosphorelay regulating sporulation initiation. Phosphorylation of spo0B during sporulation initiation. This chain is Sporulation initiation phosphotransferase F (spo0F), found in Bacillus subtilis (strain 168).